A 497-amino-acid chain; its full sequence is Putative diacyglycerol O-acyltransferase MT3584 (497 aa).

His-143 (proton acceptor) is an active-site residue.

The protein belongs to the long-chain O-acyltransferase family.

It carries out the reaction an acyl-CoA + a 1,2-diacyl-sn-glycerol = a triacyl-sn-glycerol + CoA. The protein operates within glycerolipid metabolism; triacylglycerol biosynthesis. This chain is Putative diacyglycerol O-acyltransferase MT3584, found in Mycobacterium tuberculosis (strain CDC 1551 / Oshkosh).